A 172-amino-acid polypeptide reads, in one-letter code: Adenine phosphoribosyltransferase (172 aa).

It belongs to the purine/pyrimidine phosphoribosyltransferase family. Homodimer.

It localises to the cytoplasm. The catalysed reaction is AMP + diphosphate = 5-phospho-alpha-D-ribose 1-diphosphate + adenine. It functions in the pathway purine metabolism; AMP biosynthesis via salvage pathway; AMP from adenine: step 1/1. In terms of biological role, catalyzes a salvage reaction resulting in the formation of AMP, that is energically less costly than de novo synthesis. The protein is Adenine phosphoribosyltransferase of Staphylococcus aureus (strain bovine RF122 / ET3-1).